We begin with the raw amino-acid sequence, 386 residues long: Terpene cyclase 6 (386 aa).

Mg(2+) contacts are provided by D128, N276, and S280. Residues 128-132 carry the D(D/E)XX(D/E) motif motif; it reads DDEID. The short motif at 276 to 284 is the NSE motif element; sequence NEILSLQKE. The WxxxxxRY motif motif lies at 360-367; the sequence is WSYNCERY. (2E,6E)-farnesyl diphosphate is bound by residues R366 and Y367.

Belongs to the terpene synthase family. As to quaternary structure, homodimer. Requires Mg(2+) as cofactor.

The catalysed reaction is (2E,6E)-farnesyl diphosphate + H2O = trichobrasilenol + diphosphate. It catalyses the reaction (2E,6E)-farnesyl diphosphate = alpha-humulene + diphosphate. It carries out the reaction (2E,6E)-farnesyl diphosphate = (-)-(E)-beta-caryophyllene + diphosphate. The enzyme catalyses (2E,6E)-farnesyl diphosphate = (E)-2-epi-beta-caryophyllene + diphosphate. The catalysed reaction is (2E,6E)-farnesyl diphosphate + H2O = (+)-isoafricanol + diphosphate. It catalyses the reaction (2E,6E)-farnesyl diphosphate + H2O = (+)-(2S,3R,9R)-pristinol + diphosphate. It carries out the reaction (2E,6E)-farnesyl diphosphate = african-3-ene + diphosphate. The enzyme catalyses (2E,6E)-farnesyl diphosphate = african-1-ene + diphosphate. It participates in sesquiterpene biosynthesis. In terms of biological role, terpene cyclase that is able to convert FPP into a mixture of sesquiterpene hydrocarbons and alcohols. The main product is trichobrasilenol. Additionally, side products include alpha-humulene, caryophyllene, 2-epi-caryophyllene, african-3-ene, african-1-ene, isoafricanol and pristinol. Does not accept GPP, GGPP, and GFPP as substrates. The protein is Terpene cyclase 6 of Hypocrea atroviridis (Trichoderma atroviride).